The primary structure comprises 71 residues: uncharacterized protein (71 aa).

This is an uncharacterized protein from Saccharomyces cerevisiae (strain ATCC 204508 / S288c) (Baker's yeast).